Here is a 128-residue protein sequence, read N- to C-terminus: Secreted RxLR effector protein 57 (128 aa).

An N-terminal signal peptide occupies residues 1-31 (MHRKRLRVVLSATLLDLITCVQLMLDPLVRS). Positions 58–61 (RILR) match the RxLR motif.

The protein belongs to the RxLR effector family.

The protein localises to the secreted. Its subcellular location is the host nucleus. It localises to the host cytoplasm. In terms of biological role, secreted effector that completely suppresses the host cell death induced by cell death-inducing proteins. This Plasmopara viticola (Downy mildew of grapevine) protein is Secreted RxLR effector protein 57.